Reading from the N-terminus, the 497-residue chain is Kynureninase (497 aa).

The segment at 59 to 86 is disordered; it reads GRLPAYPPNHAKPGETATAQNGTSNTND. The segment covering 75-86 has biased composition (polar residues); the sequence is ATAQNGTSNTND. Pyridoxal 5'-phosphate is bound by residues leucine 166, threonine 167, 194-197, aspartate 278, histidine 281, and tyrosine 303; that span reads FPSD. Position 304 is an N6-(pyridoxal phosphate)lysine (lysine 304). Residues tryptophan 337 and asparagine 365 each coordinate pyridoxal 5'-phosphate.

The protein belongs to the kynureninase family. Homodimer. The cofactor is pyridoxal 5'-phosphate.

The protein resides in the cytoplasm. The enzyme catalyses L-kynurenine + H2O = anthranilate + L-alanine + H(+). The catalysed reaction is 3-hydroxy-L-kynurenine + H2O = 3-hydroxyanthranilate + L-alanine + H(+). It functions in the pathway amino-acid degradation; L-kynurenine degradation; L-alanine and anthranilate from L-kynurenine: step 1/1. The protein operates within cofactor biosynthesis; NAD(+) biosynthesis; quinolinate from L-kynurenine: step 2/3. In terms of biological role, catalyzes the cleavage of L-kynurenine (L-Kyn) and L-3-hydroxykynurenine (L-3OHKyn) into anthranilic acid (AA) and 3-hydroxyanthranilic acid (3-OHAA), respectively. This Pyricularia oryzae (strain 70-15 / ATCC MYA-4617 / FGSC 8958) (Rice blast fungus) protein is Kynureninase.